Consider the following 834-residue polypeptide: Ras GTPase-activating protein 3 (834 aa).

C2 domains are found at residues 1–112 (MAVE…DTWF) and 123–263 (VQGK…EAWY). Residue Ala-2 is modified to N-acetylalanine. Tyr-66 bears the Phosphotyrosine mark. A Phosphoserine modification is found at Ser-77. The residue at position 110 (Thr-110) is a Phosphothreonine. The Ras-GAP domain occupies 346 to 561 (GRVVPFISAI…DAVKNFLDLI (216 aa)). Residues 576-677 (ILLKEGFMIK…WIDILTKVSQ (102 aa)) form the PH domain. Residues 679 to 715 (NQKRLTVFHPSAYLNGHWLCCRASSDTAIGCTPCTGG) form a Btk-type zinc finger. Zn(2+)-binding residues include His-687, Cys-698, Cys-699, and Cys-709. A phosphoserine mark is found at Ser-809 and Ser-833.

Functionally, inhibitory regulator of the Ras-cyclic AMP pathway. Binds inositol tetrakisphosphate (IP4). In Rattus norvegicus (Rat), this protein is Ras GTPase-activating protein 3 (Rasa3).